The chain runs to 450 residues: Chromosomal replication initiator protein DnaA (450 aa).

Positions 1–84 are domain I, interacts with DnaA modulators; it reads MTENEQIFWN…AVDYVYEDNL (84 aa). The segment at 84 to 109 is domain II; that stretch reads LMIEQQHQGQQGYTEQAFQQLPAVQS. Residues 110-328 are domain III, AAA+ region; that stretch reads DLNPKYSFDN…GALKDISLVA (219 aa). 4 residues coordinate ATP: Gly154, Gly156, Lys157, and Thr158. The segment at 329 to 450 is domain IV, binds dsDNA; the sequence is NFKQIDTITV…EIETIKNKIK (122 aa).

This sequence belongs to the DnaA family. As to quaternary structure, oligomerizes as a right-handed, spiral filament on DNA at oriC.

Its subcellular location is the cytoplasm. In terms of biological role, plays an essential role in the initiation and regulation of chromosomal replication. ATP-DnaA binds to the origin of replication (oriC) to initiate formation of the DNA replication initiation complex once per cell cycle. Binds the DnaA box (a 9 base pair repeat at the origin) and separates the double-stranded (ds)DNA. Forms a right-handed helical filament on oriC DNA; dsDNA binds to the exterior of the filament while single-stranded (ss)DNA is stabiized in the filament's interior. The ATP-DnaA-oriC complex binds and stabilizes one strand of the AT-rich DNA unwinding element (DUE), permitting loading of DNA polymerase. After initiation quickly degrades to an ADP-DnaA complex that is not apt for DNA replication. Binds acidic phospholipids. The polypeptide is Chromosomal replication initiator protein DnaA (Streptococcus equi subsp. zooepidemicus (strain H70)).